A 311-amino-acid polypeptide reads, in one-letter code: Prohibitin-2 (311 aa).

Residues 39–57 (GAGMGLAGLVLLGGAAFVA) traverse the membrane as a helical segment. The short motif at 141-144 (YRTL) is the AIM element.

It belongs to the prohibitin family. The mitochondrial prohibitin complex consists of two subunits (PHB1 and PHB2). The subunits assemble into a membrane-associated ring-shaped supercomplex of approximately 1 mDa. Interacts with ATG24/SNX4; the interaction is direct and plays a role in mitophagy.

The protein resides in the mitochondrion inner membrane. In terms of biological role, prohibitin probably acts as a holdase/unfoldase for the stabilization of newly synthesized mitochondrial proteins. Involved in mitophagy. Required for the switch to necrotrophic growth. This chain is Prohibitin-2, found in Colletotrichum higginsianum (strain IMI 349063) (Crucifer anthracnose fungus).